The chain runs to 418 residues: Gamma-glutamyl phosphate reductase (418 aa).

Belongs to the gamma-glutamyl phosphate reductase family.

Its subcellular location is the cytoplasm. The enzyme catalyses L-glutamate 5-semialdehyde + phosphate + NADP(+) = L-glutamyl 5-phosphate + NADPH + H(+). It participates in amino-acid biosynthesis; L-proline biosynthesis; L-glutamate 5-semialdehyde from L-glutamate: step 2/2. Functionally, catalyzes the NADPH-dependent reduction of L-glutamate 5-phosphate into L-glutamate 5-semialdehyde and phosphate. The product spontaneously undergoes cyclization to form 1-pyrroline-5-carboxylate. This chain is Gamma-glutamyl phosphate reductase, found in Trichlorobacter lovleyi (strain ATCC BAA-1151 / DSM 17278 / SZ) (Geobacter lovleyi).